Consider the following 398-residue polypeptide: uncharacterized protein (398 aa).

10 consecutive transmembrane segments (helical) span residues 43-65 (PILP…VGGL), 89-108 (IFVV…LGLS), 156-173 (TAGA…ILYL), 180-198 (IILI…LYFV), 224-246 (LFIL…ILRA), 259-281 (IIIP…IPFG), 291-311 (SVLT…AYFI), 316-338 (LILL…KAYV), 351-373 (LGLF…GYLW), and 380-397 (TFLY…LLLF).

It belongs to the major facilitator superfamily.

The protein localises to the cell membrane. This is an uncharacterized protein from Methanocaldococcus jannaschii (strain ATCC 43067 / DSM 2661 / JAL-1 / JCM 10045 / NBRC 100440) (Methanococcus jannaschii).